The chain runs to 372 residues: GDP-mannose 4,6-dehydratase (372 aa).

Residues 8–13 (GITGQD), 63–64 (DL), 85–89 (LGAQS), and Tyr100 each bind NADP(+). Thr132 is an active-site residue. Residues Glu134 and Tyr156 each act as nucleophile in the active site. NADP(+)-binding residues include Lys160, His186, and Arg191.

The protein belongs to the NAD(P)-dependent epimerase/dehydratase family. GDP-mannose 4,6-dehydratase subfamily. It depends on NADP(+) as a cofactor.

The catalysed reaction is GDP-alpha-D-mannose = GDP-4-dehydro-alpha-D-rhamnose + H2O. Its pathway is bacterial outer membrane biogenesis; LPS O-antigen biosynthesis. The protein operates within nucleotide-sugar biosynthesis; GDP-L-fucose biosynthesis via de novo pathway; GDP-L-fucose from GDP-alpha-D-mannose: step 1/2. In terms of biological role, catalyzes the conversion of GDP-D-mannose to GDP-4-dehydro-6-deoxy-D-mannose. This is GDP-mannose 4,6-dehydratase from Yersinia enterocolitica serotype O:8 / biotype 1B (strain NCTC 13174 / 8081).